We begin with the raw amino-acid sequence, 219 residues long: UPF0376 protein C36C5.12 (219 aa).

Topologically, residues 1–20 are cytoplasmic; sequence MGRLDVKNSWIEFHQDEMTS. Residues 21–43 form a helical; Signal-anchor for type II membrane protein membrane-spanning segment; it reads FLKLAIIGTVLLGVAHGANLTAA. At 44–219 the chain is on the extracellular side; it reads EKETYCELRS…VSKCDFSRLG (176 aa). N-linked (GlcNAc...) asparagine glycosylation is found at Asn-104 and Asn-204.

This sequence belongs to the UPF0376 family.

It is found in the membrane. The sequence is that of UPF0376 protein C36C5.12 from Caenorhabditis elegans.